The following is a 213-amino-acid chain: Octanoyltransferase (213 aa).

The 176-residue stretch at 32–207 folds into the BPL/LPL catalytic domain; sequence ENTPDEIWLV…NILALLNNPP (176 aa). Residues 71–78, 138–140, and 151–153 contribute to the substrate site; these read RGGQVTYH, SLG, and GLA. Residue C169 is the Acyl-thioester intermediate of the active site.

The protein belongs to the LipB family.

The protein localises to the cytoplasm. The enzyme catalyses octanoyl-[ACP] + L-lysyl-[protein] = N(6)-octanoyl-L-lysyl-[protein] + holo-[ACP] + H(+). Its pathway is protein modification; protein lipoylation via endogenous pathway; protein N(6)-(lipoyl)lysine from octanoyl-[acyl-carrier-protein]: step 1/2. Catalyzes the transfer of endogenously produced octanoic acid from octanoyl-acyl-carrier-protein onto the lipoyl domains of lipoate-dependent enzymes. Lipoyl-ACP can also act as a substrate although octanoyl-ACP is likely to be the physiological substrate. The protein is Octanoyltransferase of Citrobacter koseri (strain ATCC BAA-895 / CDC 4225-83 / SGSC4696).